A 276-amino-acid chain; its full sequence is MRLLFLLLFSLGITCSYGDEVSTRKQILVSIVPYKFLVEQIAGDTCQVFSIVMDNHDPHNYELSPKYIEKIRQVELWFKIGEGFEKTCERIISCKQVDLAANIDKITNGACCQRFLSFDTHTWLSPKNLKIQIQAITEALVETAPEHETLYRKNCSLLQSQLDLLDQKISSIVSSTSQRNVLVTHGAFAYFCRDYGFIQHTIERANHSELSPKDVVRVERTIRDHNLHSVILLKHAGKRSSAALVRKFNMTPILLDPYAEDVFNNLLAIATAFANL.

A signal peptide spans 1–18 (MRLLFLLLFSLGITCSYG). 4 residues coordinate a divalent metal cation: His59, His121, His185, and Asp256.

Belongs to the bacterial solute-binding protein 9 family.

It localises to the periplasm. Functionally, part of an ATP-binding cassette (ABC) transport system involved in metal import. Binds a metal with high affinity and specificity and delivers it to the membrane permease for translocation into the cytoplasm. This Chlamydia trachomatis serovar D (strain ATCC VR-885 / DSM 19411 / UW-3/Cx) protein is Putative metal-binding protein CT_415.